The following is a 248-amino-acid chain: Uridylate kinase (248 aa).

13–16 (KLSG) serves as a coordination point for ATP. Gly55 is a UMP binding site. Residues Gly56 and Arg60 each contribute to the ATP site. Residues Asp75 and 136 to 143 (TGNPYFTT) contribute to the UMP site. Residues Thr163, Tyr169, and Asp172 each contribute to the ATP site.

Belongs to the UMP kinase family. Homohexamer.

Its subcellular location is the cytoplasm. It carries out the reaction UMP + ATP = UDP + ADP. It functions in the pathway pyrimidine metabolism; CTP biosynthesis via de novo pathway; UDP from UMP (UMPK route): step 1/1. With respect to regulation, inhibited by UTP. Functionally, catalyzes the reversible phosphorylation of UMP to UDP. In Leptospira interrogans serogroup Icterohaemorrhagiae serovar copenhageni (strain Fiocruz L1-130), this protein is Uridylate kinase.